Consider the following 314-residue polypeptide: MAFLEDGNHTAVTEFVLFGLTDDPVLRVILFIIFLCIYLVNVSGNLSTILLIRVSSQLHHPMYFFLSHLASVDVGYSSTVTPKMLANFLLERSTISYLGCTIQLFSGAFVGTLECFLLATMAYDRFIAICNPLLYSTKMSTQVCIQLLVGSYIGGFLNASSFLLSFFPLLFCGPNRVNHYSCDLTPLIELSCSGSNVPIVPASFCSAFVIIVTVSVIAISYTYILITILKMRSTEGRQKAFSTCTSHLTAVTLYYGTVTFIYVMPKSSYSTDQNKVVSVFYTVVIPMLNPIIYSLRNNEIKGALKRQLARKIFS.

The Extracellular segment spans residues 1 to 28 (MAFLEDGNHTAVTEFVLFGLTDDPVLRV). The N-linked (GlcNAc...) asparagine glycan is linked to asparagine 8. The chain crosses the membrane as a helical span at residues 29-49 (ILFIIFLCIYLVNVSGNLSTI). Over 50-57 (LLIRVSSQ) the chain is Cytoplasmic. A helical transmembrane segment spans residues 58 to 78 (LHHPMYFFLSHLASVDVGYSS). Residues 79 to 102 (TVTPKMLANFLLERSTISYLGCTI) are Extracellular-facing. Cysteine 100 and cysteine 192 form a disulfide bridge. Residues 103–123 (QLFSGAFVGTLECFLLATMAY) form a helical membrane-spanning segment. At 124-136 (DRFIAICNPLLYS) the chain is on the cytoplasmic side. A helical membrane pass occupies residues 137 to 157 (TKMSTQVCIQLLVGSYIGGFL). Over 158 to 199 (NASSFLLSFFPLLFCGPNRVNHYSCDLTPLIELSCSGSNVPI) the chain is Extracellular. A helical transmembrane segment spans residues 200-220 (VPASFCSAFVIIVTVSVIAIS). Over 221-240 (YTYILITILKMRSTEGRQKA) the chain is Cytoplasmic. The chain crosses the membrane as a helical span at residues 241-261 (FSTCTSHLTAVTLYYGTVTFI). Over 262–274 (YVMPKSSYSTDQN) the chain is Extracellular. Residues 275-295 (KVVSVFYTVVIPMLNPIIYSL) form a helical membrane-spanning segment. The Cytoplasmic segment spans residues 296–314 (RNNEIKGALKRQLARKIFS).

It belongs to the G-protein coupled receptor 1 family.

It is found in the cell membrane. In terms of biological role, potential odorant receptor. In Mus musculus (Mouse), this protein is Olfactory receptor 5P51.